A 355-amino-acid chain; its full sequence is NADH dehydrogenase [ubiquinone] 1 alpha subcomplex subunit 10, mitochondrial (355 aa).

Residues 1 to 35 (MALRLLRLVPASAPARGLAAGAQRVGRIHTSVHCK) constitute a mitochondrion transit peptide. K122 is modified (N6-acetyllysine; alternate). An N6-succinyllysine; alternate modification is found at K122. A Phosphoserine; by PINK1 modification is found at S250. Position 285 is an N6-succinyllysine (K285).

This sequence belongs to the complex I NDUFA10 subunit family. As to quaternary structure, complex I is composed of 45 different subunits. This a component of the hydrophobic protein fraction. FAD is required as a cofactor. In terms of processing, phosphorylation at Ser-250 by PINK1 is required for the binding and/or reduction of the complex I substrate ubiquinone. Acetylation of Lys-242 is observed in liver mitochondria from fasted mice but not from fed mice.

It localises to the mitochondrion matrix. Its function is as follows. Accessory subunit of the mitochondrial membrane respiratory chain NADH dehydrogenase (Complex I), that is believed not to be involved in catalysis. Complex I functions in the transfer of electrons from NADH to the respiratory chain. The immediate electron acceptor for the enzyme is believed to be ubiquinone. In Mus musculus (Mouse), this protein is NADH dehydrogenase [ubiquinone] 1 alpha subcomplex subunit 10, mitochondrial (Ndufa10).